The sequence spans 305 residues: Tyrosine recombinase XerC (305 aa).

The Core-binding (CB) domain maps to 1–84 (MNEVFESYLT…TLRGFYKYAL (84 aa)). Residues 105–299 (KLPVFMFPKQ…TAEQLQNLYK (195 aa)) form the Tyr recombinase domain. Residues arginine 146, lysine 170, histidine 251, arginine 254, and histidine 277 contribute to the active site. Residue tyrosine 286 is the O-(3'-phospho-DNA)-tyrosine intermediate of the active site.

It belongs to the 'phage' integrase family. XerC subfamily. As to quaternary structure, forms a cyclic heterotetrameric complex composed of two molecules of XerC and two molecules of XerD.

Its subcellular location is the cytoplasm. Functionally, site-specific tyrosine recombinase, which acts by catalyzing the cutting and rejoining of the recombining DNA molecules. The XerC-XerD complex is essential to convert dimers of the bacterial chromosome into monomers to permit their segregation at cell division. It also contributes to the segregational stability of plasmids. The chain is Tyrosine recombinase XerC from Treponema denticola (strain ATCC 35405 / DSM 14222 / CIP 103919 / JCM 8153 / KCTC 15104).